A 150-amino-acid chain; its full sequence is UPF0178 protein Shewmr4_1560 (150 aa).

It belongs to the UPF0178 family.

This chain is UPF0178 protein Shewmr4_1560, found in Shewanella sp. (strain MR-4).